A 295-amino-acid chain; its full sequence is 33 kDa chaperonin (295 aa).

Intrachain disulfides connect Cys238-Cys240 and Cys271-Cys274.

The protein belongs to the HSP33 family. Post-translationally, under oxidizing conditions two disulfide bonds are formed involving the reactive cysteines. Under reducing conditions zinc is bound to the reactive cysteines and the protein is inactive.

The protein resides in the cytoplasm. Redox regulated molecular chaperone. Protects both thermally unfolding and oxidatively damaged proteins from irreversible aggregation. Plays an important role in the bacterial defense system toward oxidative stress. The sequence is that of 33 kDa chaperonin from Clostridium botulinum (strain Eklund 17B / Type B).